A 549-amino-acid chain; its full sequence is Dihydroxy-acid dehydratase (549 aa).

A Mg(2+)-binding site is contributed by Asp-78. Cys-119 contributes to the [2Fe-2S] cluster binding site. The Mg(2+) site is built by Asp-120 and Lys-121. Position 121 is an N6-carboxylysine (Lys-121). Residue Cys-192 coordinates [2Fe-2S] cluster. Glu-439 is a Mg(2+) binding site. The active-site Proton acceptor is the Ser-465.

This sequence belongs to the IlvD/Edd family. Homodimer. The cofactor is [2Fe-2S] cluster. Requires Mg(2+) as cofactor.

It catalyses the reaction (2R)-2,3-dihydroxy-3-methylbutanoate = 3-methyl-2-oxobutanoate + H2O. It carries out the reaction (2R,3R)-2,3-dihydroxy-3-methylpentanoate = (S)-3-methyl-2-oxopentanoate + H2O. It participates in amino-acid biosynthesis; L-isoleucine biosynthesis; L-isoleucine from 2-oxobutanoate: step 3/4. Its pathway is amino-acid biosynthesis; L-valine biosynthesis; L-valine from pyruvate: step 3/4. In terms of biological role, functions in the biosynthesis of branched-chain amino acids. Catalyzes the dehydration of (2R,3R)-2,3-dihydroxy-3-methylpentanoate (2,3-dihydroxy-3-methylvalerate) into 2-oxo-3-methylpentanoate (2-oxo-3-methylvalerate) and of (2R)-2,3-dihydroxy-3-methylbutanoate (2,3-dihydroxyisovalerate) into 2-oxo-3-methylbutanoate (2-oxoisovalerate), the penultimate precursor to L-isoleucine and L-valine, respectively. This is Dihydroxy-acid dehydratase from Endomicrobium trichonymphae.